The following is a 418-amino-acid chain: Tyrosine--tRNA ligase (418 aa).

Y38 is a binding site for L-tyrosine. The 'HIGH' region signature appears at 43–52; sequence CTARSLHIGS. Residues Y175 and Q179 each coordinate L-tyrosine. Residues 235–239 carry the 'KMSKS' region motif; the sequence is KMGKT. K238 contacts ATP. Residues 348–413 enclose the S4 RNA-binding domain; it reads LSVVKLLQVS…CGKKRHLKVV (66 aa).

It belongs to the class-I aminoacyl-tRNA synthetase family. TyrS type 1 subfamily. In terms of assembly, homodimer.

It localises to the cytoplasm. The catalysed reaction is tRNA(Tyr) + L-tyrosine + ATP = L-tyrosyl-tRNA(Tyr) + AMP + diphosphate + H(+). Catalyzes the attachment of tyrosine to tRNA(Tyr) in a two-step reaction: tyrosine is first activated by ATP to form Tyr-AMP and then transferred to the acceptor end of tRNA(Tyr). The chain is Tyrosine--tRNA ligase from Ehrlichia ruminantium (strain Welgevonden).